Here is a 1011-residue protein sequence, read N- to C-terminus: DNA-directed RNA polymerase subunit beta'' (1011 aa).

Zn(2+) contacts are provided by C216, C282, C288, and C291.

It belongs to the RNA polymerase beta' chain family. RpoC2 subfamily. In terms of assembly, in plastids the minimal PEP RNA polymerase catalytic core is composed of four subunits: alpha, beta, beta', and beta''. When a (nuclear-encoded) sigma factor is associated with the core the holoenzyme is formed, which can initiate transcription. Zn(2+) is required as a cofactor.

It localises to the plastid. The protein localises to the chloroplast. The catalysed reaction is RNA(n) + a ribonucleoside 5'-triphosphate = RNA(n+1) + diphosphate. Functionally, DNA-dependent RNA polymerase catalyzes the transcription of DNA into RNA using the four ribonucleoside triphosphates as substrates. The protein is DNA-directed RNA polymerase subunit beta'' of Ostreococcus tauri.